The primary structure comprises 425 residues: Tol-Pal system protein TolB (425 aa).

A signal peptide spans 1–25 (MTRKHILSFALMTALGMTVTSTAFA).

The protein belongs to the TolB family. As to quaternary structure, the Tol-Pal system is composed of five core proteins: the inner membrane proteins TolA, TolQ and TolR, the periplasmic protein TolB and the outer membrane protein Pal. They form a network linking the inner and outer membranes and the peptidoglycan layer.

It localises to the periplasm. Its function is as follows. Part of the Tol-Pal system, which plays a role in outer membrane invagination during cell division and is important for maintaining outer membrane integrity. This Acinetobacter baylyi (strain ATCC 33305 / BD413 / ADP1) protein is Tol-Pal system protein TolB.